The primary structure comprises 573 residues: Glutathione/L-cysteine transport system ATP-binding/permease protein CydC (573 aa).

At 1–15 (MRALLPYLALYKRHK) the chain is on the cytoplasmic side. Helical transmembrane passes span 16-36 (WMLSLGIVLAIVTLLASIGLL) and 37-57 (TLSGWFLSASAVAGVAGLYSF). The ABC transmembrane type-1 domain maps to 20-306 (LGIVLAIVTL…VTGAFQHLGQ (287 aa)). Residues 58–136 (NYMLPAAGVR…VDTLDHLYLR (79 aa)) are Cytoplasmic-facing. A helical membrane pass occupies residues 137 to 157 (VISPLVGAFVVIMVVTIGLSF). Topologically, residues 158 to 161 (LDFT) are periplasmic. The chain crosses the membrane as a helical span at residues 162 to 182 (LAFTLGGIMLLTLFLMPPLFY). The Cytoplasmic segment spans residues 183–249 (RAGKSTGQNL…QSELTALSQA (67 aa)). A helical membrane pass occupies residues 250–270 (IMLLIGALAVILMLWMASGGV). Topologically, residues 271 to 276 (GGNAQP) are periplasmic. A helical membrane pass occupies residues 277–297 (GALIALFVFCALAAFEALAPV). Over 298–573 (TGAFQHLGQV…GRYYQFKQGL (276 aa)) the chain is Cytoplasmic. Residues 339–572 (LTLRDVQFTY…QGRYYQFKQG (234 aa)) enclose the ABC transporter domain. 373-380 (GRTGCGKS) serves as a coordination point for ATP.

Belongs to the ABC transporter superfamily. Cysteine exporter (TC 3.A.1.129.1) family. In terms of assembly, forms a heterodimer with CydD.

The protein localises to the cell inner membrane. It catalyses the reaction L-cysteine(in) + ATP + H2O = L-cysteine(out) + ADP + phosphate + H(+). The enzyme catalyses glutathione(in) + ATP + H2O = glutathione(out) + ADP + phosphate + H(+). ATPase activity is stimulated by various thiol compounds. The presence of heme leads to a further enhancement of thiol-stimulated ATPase activity, although a large excess of heme inhibits activity. Glutathione transport is inhibited by sodium orthovanadate, an inhibitor of ABC-type transport systems, but not by the proton ionophore carbonyl cyanide m-chlorophenylhydrazone (CCCP). In terms of biological role, part of the ABC transporter complex CydDC that exports the reduced low-molecular-weight thiols cysteine and glutathione to the periplasm. Export of these thiol-containing redox-active molecules may be crucial for redox homeostasis in the periplasm, permitting correct assembly of various respiratory complexes and formation of correct disulfide bonds in periplasmic and secreted proteins. CydC contains transmembrane domains (TMD), which form a pore in the inner membrane, and an ATP-binding domain (NBD), which is responsible for energy generation. Required for the assembly of functional cytochrome bd-type quinol oxidases and periplasmic c-type cytochromes. Overexpression of CydDC under anaerobic conditions also results in the formation of a heme biosynthesis-derived pigment, P-574. CydDC binds heme b, but heme is probably not transported by the complex and instead has a role in regulating ATPase activity. Functionally, conversely, a more recent study suggests an alternative function of CydDC: authors suggest that CydDC does not mediate the export of L-cysteine but rather reduces cytoplasmic L-cystine to L-cysteine. The principle function of CydDC would be to maintain the reduced state of cytoplasmic L-cysteine, thereby providing an important connection between sulfur metabolism, oxidative stress and resistance to antibiotics. This chain is Glutathione/L-cysteine transport system ATP-binding/permease protein CydC, found in Escherichia coli (strain K12).